We begin with the raw amino-acid sequence, 88 residues long: UPF0297 protein BT9727_4120 (88 aa).

Belongs to the UPF0297 family.

The chain is UPF0297 protein BT9727_4120 from Bacillus thuringiensis subsp. konkukian (strain 97-27).